We begin with the raw amino-acid sequence, 475 residues long: Bifunctional protein HldE (475 aa).

The segment at 1–318 (MKITLPEFEK…ANALYTEQET (318 aa)) is ribokinase. 195 to 198 (NMSE) is an ATP binding site. Residue aspartate 264 is part of the active site. Residues 344–475 (MTNGCFDILH…DIIKTIRERG (132 aa)) are cytidylyltransferase.

It in the N-terminal section; belongs to the carbohydrate kinase PfkB family. This sequence in the C-terminal section; belongs to the cytidylyltransferase family. In terms of assembly, homodimer.

It catalyses the reaction D-glycero-beta-D-manno-heptose 7-phosphate + ATP = D-glycero-beta-D-manno-heptose 1,7-bisphosphate + ADP + H(+). The enzyme catalyses D-glycero-beta-D-manno-heptose 1-phosphate + ATP + H(+) = ADP-D-glycero-beta-D-manno-heptose + diphosphate. The protein operates within nucleotide-sugar biosynthesis; ADP-L-glycero-beta-D-manno-heptose biosynthesis; ADP-L-glycero-beta-D-manno-heptose from D-glycero-beta-D-manno-heptose 7-phosphate: step 1/4. It functions in the pathway nucleotide-sugar biosynthesis; ADP-L-glycero-beta-D-manno-heptose biosynthesis; ADP-L-glycero-beta-D-manno-heptose from D-glycero-beta-D-manno-heptose 7-phosphate: step 3/4. Its function is as follows. Catalyzes the phosphorylation of D-glycero-D-manno-heptose 7-phosphate at the C-1 position to selectively form D-glycero-beta-D-manno-heptose-1,7-bisphosphate. In terms of biological role, catalyzes the ADP transfer from ATP to D-glycero-beta-D-manno-heptose 1-phosphate, yielding ADP-D-glycero-beta-D-manno-heptose. The chain is Bifunctional protein HldE from Aeromonas hydrophila subsp. hydrophila (strain ATCC 7966 / DSM 30187 / BCRC 13018 / CCUG 14551 / JCM 1027 / KCTC 2358 / NCIMB 9240 / NCTC 8049).